The following is an 809-amino-acid chain: Mediator of RNA polymerase II transcription subunit 15 (809 aa).

3 disordered regions span residues 115-137 (AMQG…QMIQ), 183-211 (QLQQ…QQNQ), and 413-549 (GQMM…ASQS). Gly residues predominate over residues 119–128 (VAGGQQGAGA). Positions 446–467 (QQMPQAQQMMSSPSPVQVQTPQ) are enriched in low complexity. Residues 468-484 (SMPPPPQPQPSPQPPSS) show a composition bias toward pro residues. 2 stretches are compositionally biased toward low complexity: residues 485 to 502 (QPNS…GFQP) and 510 to 520 (QSPASSRTPQS). The segment covering 533–549 (TPGNPSSVMSPAGASQS) has biased composition (polar residues).

This sequence belongs to the Mediator complex subunit 15 family. Component of the Mediator complex. Interacts with srebf1 and srebf2. Interacts with smad2, smad3 and smad4.

The protein resides in the cytoplasm. It is found in the nucleus. In terms of biological role, component of the Mediator complex, a coactivator involved in the regulated transcription of nearly all RNA polymerase II-dependent genes. Mediator functions as a bridge to convey information from gene-specific regulatory proteins to the basal RNA polymerase II transcription machinery. Mediator is recruited to promoters by direct interactions with regulatory proteins and serves as a scaffold for the assembly of a functional preinitiation complex with RNA polymerase II and the general transcription factors. Required for cholesterol-dependent gene regulation. Positively regulates the Nodal signaling pathway. In Danio rerio (Zebrafish), this protein is Mediator of RNA polymerase II transcription subunit 15 (med15).